The sequence spans 120 residues: Protein VraC (120 aa).

This chain is Protein VraC, found in Staphylococcus epidermidis (strain ATCC 12228 / FDA PCI 1200).